Consider the following 44-residue polypeptide: Homeobox protein DLX-1 (44 aa).

Residues 19–44 (RALSAGSPPVPPGWNRIPPLGRAQEE) are disordered.

It belongs to the distal-less homeobox family. Interacts with SMAD4 (via homeobox DNA-binding domain). Interacts (via homeobox DNA-binding domain) with POU4F2; this interaction suppresses DLX1-mediated transcriptional activity in postnatal retina and enhances retinal ganglion cell (RGC) differentiation.

It localises to the nucleus. Plays a role as a transcriptional activator or repressor. Inhibits several cytokine signaling pathways, such as TGFB1, activin-A/INHBA and BMP4 by interfering with the transcriptional stimulatory activity of transcription factors, such as MSX2, FAST2, SMAD2 and SMAD3 during hematopoietic cell differentiation. Plays a role in terminal differentiation of interneurons, such as amacrine and bipolar cells in the developing retina. Likely to play a regulatory role in the development of the ventral forebrain. May play a role in craniofacial patterning and morphogenesis and may be involved in the early development of diencephalic subdivisions. This Rattus norvegicus (Rat) protein is Homeobox protein DLX-1 (Dlx1).